A 325-amino-acid polypeptide reads, in one-letter code: D-alanine--D-alanine ligase (325 aa).

The ATP-grasp domain maps to K109–E309. Residue C136 to E191 coordinates ATP. D262, E276, and N278 together coordinate Mg(2+).

The protein belongs to the D-alanine--D-alanine ligase family. Mg(2+) serves as cofactor. Mn(2+) is required as a cofactor.

The protein localises to the cytoplasm. It catalyses the reaction 2 D-alanine + ATP = D-alanyl-D-alanine + ADP + phosphate + H(+). Its pathway is cell wall biogenesis; peptidoglycan biosynthesis. Its function is as follows. Cell wall formation. The sequence is that of D-alanine--D-alanine ligase from Solibacter usitatus (strain Ellin6076).